We begin with the raw amino-acid sequence, 206 residues long: Inner membrane protein YnjF (206 aa).

Residues 1 to 37 lie on the Periplasmic side of the membrane; that stretch reads MLDRHLHPRIKPLLHQCVRVLDKPGITPDGLTLVGFA. A helical transmembrane segment spans residues 38–60; sequence IGVLALPFLALGWYLAALVVILL. The Cytoplasmic segment spans residues 61–79; it reads NRLLDGLDGALARRRELTD. Residues 80 to 102 traverse the membrane as a helical segment; sequence AGGFLDISLDFLFYALVPFGFIL. Over 103–111 the chain is Periplasmic; sequence AAPEQNALA. Residues 112–134 form a helical membrane-spanning segment; that stretch reads GGWLLFAFIGTGSSFLAFAALAA. Residues 135–146 lie on the Cytoplasmic side of the membrane; that stretch reads KHQIDNPGYAHK. The helical transmembrane segment at 147–169 threads the bilayer; that stretch reads SFYYLGGLTEGTETILLFVLGCL. The Periplasmic segment spans residues 170–173; that stretch reads FPAW. Residues 174-196 traverse the membrane as a helical segment; it reads FAWFAWIFGALCWMTTFTRVWSG. Residues 197-206 lie on the Cytoplasmic side of the membrane; the sequence is YLTLKSLQRQ.

It belongs to the CDP-alcohol phosphatidyltransferase class-I family.

The protein localises to the cell inner membrane. This chain is Inner membrane protein YnjF (ynjF), found in Escherichia coli (strain K12).